The primary structure comprises 429 residues: Histidine--tRNA ligase (429 aa).

Belongs to the class-II aminoacyl-tRNA synthetase family. Homodimer.

The protein resides in the cytoplasm. It carries out the reaction tRNA(His) + L-histidine + ATP = L-histidyl-tRNA(His) + AMP + diphosphate + H(+). This chain is Histidine--tRNA ligase, found in Pseudomonas aeruginosa (strain UCBPP-PA14).